Consider the following 1165-residue polypeptide: Disease resistance protein RPS4B (1165 aa).

Positions 12–174 constitute a TIR domain; sequence PQHQVFINFR…EIVKEVKKVL (163 aa). Glu-86 is an active-site residue. The region spanning 211–474 is the NB-ARC domain; sequence KQRLKELEEK…FLDIACFRSQ (264 aa). The LRR 1 repeat unit spans residues 592–613; sequence SHCPHECLTNNKINMPDGLELP. An LRR 2; degenerate repeat occupies 614–635; that stretch reads LKEVRCLHWLKFPLEELPNDFD. 6 LRR repeats span residues 636 to 659, 684 to 703, 704 to 725, 726 to 748, 772 to 794, and 795 to 818; these read PINLVDLKLPYSEIERLWDGVKDT, NLQRLNLEGCTSLESLRDVN, LTSLKTLTLSNCSNFKEFPLIP, ENLKALYLDGTSISQLPDNVGNL, LKTLQKLVLSGCSKLKEFPEINK, and SSLKILLLDGTSIKTMPQLPSVQY. Residues 819–836 form an LRR 9; degenerate repeat; the sequence is LCLSRNDHLIYLPAGINQ. One copy of the LRR 10 repeat lies at 837–863; it reads VSQLTRLDLKYCTKLTYVPELPPTLQY.

The protein belongs to the disease resistance TIR-NB-LRR family. Interacts with RRS1B. RPS4B-RRS1B heterodimer interacts with the bacterial effectors AvrRps4 and PopP2.

The protein resides in the nucleus. The enzyme catalyses NAD(+) + H2O = ADP-D-ribose + nicotinamide + H(+). Functionally, disease resistance (R) protein that specifically recognizes the AvrRps4 type III effector avirulence protein from P.syringae. Heterodimerization with RRS1B is required to form a functional complex to recognize AvrRps4 and to mediate the hypersensitive response. The polypeptide is Disease resistance protein RPS4B (Arabidopsis thaliana (Mouse-ear cress)).